The following is a 170-amino-acid chain: MSNELKQVEQTEEAVVVSETKDYIKVYENGKYRRKAKYQQLNSMSHRELTDEEEINIFNLLNGAEGSAVEMKRAVGSKVTIVDFITVPYTKIDEDTGVEENGVLTYLINENGEAIATSSKAVYFTLNRLLIQCGKHADGTWKRPIVEIISVKQTNGDGMDLKLVGFDKKK.

Residues 1-26 (MSNELKQVEQTEEAVVVSETKDYIKV) form an oligomerization region.

Belongs to the phi29likevirus single-strand-binding protein family. Hexamer.

Its function is as follows. Single-stranded DNA-binding protein required for the elongation during viral DNA replication by strand displacement. Displaced viral DNA strands are transiently coated with the ssDNA-binding protein and therefore protected againt nucleases. The latter is then probably removed by the replisome that performs lagging strand synthesis or during the events that lead up to the recombination process. Has helix-destabilizing activity since it removes secondary structure from the ssDNA in replicative intermediates. In Bacillus subtilis (Bacteriophage GA-1), this protein is Single-stranded DNA-binding protein.